Consider the following 84-residue polypeptide: Small ribosomal subunit protein eS27 (84 aa).

Basic and acidic residues predominate over residues 1-16; that stretch reads MPLAKDPLHPSPEEEK. Residues 1 to 25 form a disordered region; it reads MPLAKDPLHPSPEEEKRKHKKKRLV. Ser11 carries the post-translational modification Phosphoserine. The C4-type zinc finger occupies 38-60; that stretch reads PGCYKITTVFSHAQTVVLCVGCS.

It belongs to the eukaryotic ribosomal protein eS27 family. Component of the small ribosomal subunit. Part of the small subunit (SSU) processome, composed of more than 70 proteins and the RNA chaperone small nucleolar RNA (snoRNA) U3. It depends on Zn(2+) as a cofactor.

Its subcellular location is the cytoplasm. The protein resides in the nucleus. It localises to the nucleolus. Its function is as follows. Component of the small ribosomal subunit. The ribosome is a large ribonucleoprotein complex responsible for the synthesis of proteins in the cell. Required for proper rRNA processing and maturation of 18S rRNAs. Part of the small subunit (SSU) processome, first precursor of the small eukaryotic ribosomal subunit. During the assembly of the SSU processome in the nucleolus, many ribosome biogenesis factors, an RNA chaperone and ribosomal proteins associate with the nascent pre-rRNA and work in concert to generate RNA folding, modifications, rearrangements and cleavage as well as targeted degradation of pre-ribosomal RNA by the RNA exosome. The protein is Small ribosomal subunit protein eS27 (RPS27) of Pongo abelii (Sumatran orangutan).